The sequence spans 225 residues: Futalosine hydrolase (225 aa).

The protein belongs to the PNP/UDP phosphorylase family. Futalosine hydrolase subfamily. Homotetramer.

The enzyme catalyses futalosine + H2O = dehypoxanthine futalosine + hypoxanthine. It participates in quinol/quinone metabolism; menaquinone biosynthesis. With respect to regulation, no enhancing of inhibitory effects are observed with divalent metal ions. Slightly inhibited by hypoxanthine. Its function is as follows. Catalyzes the hydrolysis of futalosine (FL) to dehypoxanthine futalosine (DHFL) and hypoxanthine, a step in the biosynthesis of menaquinone (MK, vitamin K2). Is highly specific to futalosine since it does not accept aminodeoxyfutalosine (AFL), or any structurally related nucleotides and nucleosides as substrate. This chain is Futalosine hydrolase, found in Thermus thermophilus (strain ATCC 27634 / DSM 579 / HB8).